We begin with the raw amino-acid sequence, 415 residues long: NAD-dependent protein deacetylase hst4 (415 aa).

Positions methionine 1–lysine 26 are disordered. The Deacetylase sirtuin-type domain occupies threonine 40–proline 337. NAD(+) contacts are provided by residues glycine 65 to phenylalanine 84 and glutamine 153 to aspartate 156. The active-site Proton acceptor is histidine 184. 4 residues coordinate Zn(2+): cysteine 192, cysteine 195, cysteine 214, and cysteine 217. NAD(+) contacts are provided by residues glycine 273–serine 275, asparagine 303–aspartate 305, and leucine 323.

This sequence belongs to the sirtuin family. Class I subfamily. Requires Zn(2+) as cofactor.

The protein localises to the nucleus. It is found in the nucleolus. It carries out the reaction N(6)-acetyl-L-lysyl-[protein] + NAD(+) + H2O = 2''-O-acetyl-ADP-D-ribose + nicotinamide + L-lysyl-[protein]. Its function is as follows. NAD-dependent histone deacetylase, which contributes to both telomeric and centromeric silencing, proper cell cycle progression, DNA damage control, recombination, and genomic maintenance. In Schizosaccharomyces pombe (strain 972 / ATCC 24843) (Fission yeast), this protein is NAD-dependent protein deacetylase hst4 (hst4).